The following is a 349-amino-acid chain: ATP phosphoribosyltransferase regulatory subunit (349 aa).

The segment at 327 to 349 (GRGRGVRPRRASARGGRARARPR) is disordered. A compositionally biased stretch (basic residues) spans 330-349 (RGVRPRRASARGGRARARPR).

The protein belongs to the class-II aminoacyl-tRNA synthetase family. HisZ subfamily. Heteromultimer composed of HisG and HisZ subunits.

It localises to the cytoplasm. Its pathway is amino-acid biosynthesis; L-histidine biosynthesis; L-histidine from 5-phospho-alpha-D-ribose 1-diphosphate: step 1/9. Functionally, required for the first step of histidine biosynthesis. May allow the feedback regulation of ATP phosphoribosyltransferase activity by histidine. This Anaeromyxobacter sp. (strain K) protein is ATP phosphoribosyltransferase regulatory subunit.